Consider the following 217-residue polypeptide: UPF0502 protein Sfri_1696 (217 aa).

It belongs to the UPF0502 family.

This Shewanella frigidimarina (strain NCIMB 400) protein is UPF0502 protein Sfri_1696.